The following is a 378-amino-acid chain: Signal recognition particle receptor FtsY (378 aa).

Residues 184 to 191 (GVNGTGKT), 266 to 270 (DTAGR), and 330 to 333 (TKLD) each bind GTP.

The protein belongs to the GTP-binding SRP family. FtsY subfamily. As to quaternary structure, part of the signal recognition particle protein translocation system, which is composed of SRP and FtsY. SRP is a ribonucleoprotein composed of Ffh and a 4.5S RNA molecule.

It is found in the cell membrane. The protein resides in the cytoplasm. It catalyses the reaction GTP + H2O = GDP + phosphate + H(+). Its function is as follows. Involved in targeting and insertion of nascent membrane proteins into the cytoplasmic membrane. Acts as a receptor for the complex formed by the signal recognition particle (SRP) and the ribosome-nascent chain (RNC). Interaction with SRP-RNC leads to the transfer of the RNC complex to the Sec translocase for insertion into the membrane, the hydrolysis of GTP by both Ffh and FtsY, and the dissociation of the SRP-FtsY complex into the individual components. The sequence is that of Signal recognition particle receptor FtsY from Buchnera aphidicola subsp. Acyrthosiphon pisum (strain APS) (Acyrthosiphon pisum symbiotic bacterium).